The primary structure comprises 233 residues: Probable translation initiation factor, mitochondrial (233 aa).

The N-terminal 39 residues, 1–39 (MNSYLQFPHRKLFIQFSYSLTSVFRKCQSRTFMNSQFAS), are a transit peptide targeting the mitochondrion.

Belongs to the IF-3 family.

Its subcellular location is the mitochondrion. Its function is as follows. May be involved in mitochondrial translation initiation. In Schizosaccharomyces pombe (strain 972 / ATCC 24843) (Fission yeast), this protein is Probable translation initiation factor, mitochondrial.